The following is a 291-amino-acid chain: Verruculogen synthase (291 aa).

Residue Tyr-68 is part of the active site.

The protein belongs to the PhyH family. In terms of assembly, homodimer. Fe cation is required as a cofactor.

It catalyses the reaction fumitremorgin B + 2-oxoglutarate + AH2 + 2 O2 = verruculogen + succinate + A + CO2 + H2O. The protein operates within mycotoxin biosynthesis. In terms of biological role, verruculogen synthase; part of the gene cluster that mediates the biosynthesis of fumitremorgins, indole alkaloids that carry not only intriguing chemical structures, but also interesting biological and pharmacological activities. The biosynthesis of fumitremorgin-type alkaloids begins by condensation of the two amino acids L-tryptophan and L-proline to brevianamide F, catalyzed by the non-ribosomal peptide synthetase ftmA. Brevianamide F is then prenylated by the prenyltransferase ftmPT1/ftmB in the presence of dimethylallyl diphosphate, resulting in the formation of tryprostatin B. The three cytochrome P450 monooxygenases, ftmP450-1/ftmC, ftmP450-2/ftmE and ftmP450-3/FtmG, are responsible for the conversion of tryprostatin B to 6-hydroxytryprostatin B, tryprostatin A to fumitremorgin C and fumitremorgin C to 12,13-dihydroxyfumitremorgin C, respectively. The putative methyltransferase ftmMT/ftmD is expected for the conversion of 6-hydroxytryprostatin B to tryprostatin A. FtmPT2/FtmH catalyzes the prenylation of 12,13-dihydroxyfumitre-morgin C in the presence of dimethylallyl diphosphate, resulting in the formation of fumitremorgin B. Fumitremorgin B is further converted to verruculogen by ftmOx1/ftmF via the insertion of an endoperoxide bond between the two prenyl moieties. In some fungal species, verruculogen is further converted to fumitremorgin A, but the enzymes involved in this step have not been identified yet. The polypeptide is Verruculogen synthase (Aspergillus fumigatus (strain ATCC MYA-4609 / CBS 101355 / FGSC A1100 / Af293) (Neosartorya fumigata)).